The primary structure comprises 59 residues: UPF0434 protein LHK_01103 (59 aa).

This sequence belongs to the UPF0434 family.

In Laribacter hongkongensis (strain HLHK9), this protein is UPF0434 protein LHK_01103.